A 143-amino-acid polypeptide reads, in one-letter code: UPF0201 protein Pisl_1658 (143 aa).

The protein belongs to the UPF0201 family.

In Pyrobaculum islandicum (strain DSM 4184 / JCM 9189 / GEO3), this protein is UPF0201 protein Pisl_1658.